The sequence spans 383 residues: UDP-N-acetylglucosamine 2-epimerase (383 aa).

This sequence belongs to the UDP-N-acetylglucosamine 2-epimerase family.

It carries out the reaction UDP-N-acetyl-alpha-D-glucosamine = UDP-N-acetyl-alpha-D-mannosamine. Its pathway is capsule biogenesis; capsule polysaccharide biosynthesis. Functionally, non-hydrolyzing C2-epimerase involved in the biosynthesis of capsular polysaccharides. Catalyzes the C2 epimerization of UDP-N-acetylglucosamine (UDP-GlcNAc) to form UDP-N-acetylmannosamine (UDP-ManNAc). This is UDP-N-acetylglucosamine 2-epimerase from Campylobacter jejuni.